The sequence spans 700 residues: Interleukin-1 receptor accessory protein-like 1-B (700 aa).

The N-terminal stretch at 1 to 18 is a signal peptide; the sequence is MRSRVPLQILLYAAVIRS. Over 19 to 357 the chain is Extracellular; sequence LKVVSKRGSV…QLSRRELMYT (339 aa). Residues 32 to 134 enclose the Ig-like C2-type 1 domain; that stretch reads TDWSVDYLRY…YCMKVSMALT (103 aa). A disulfide bridge connects residues cysteine 53 and cysteine 118. N-linked (GlcNAc...) asparagine glycosylation is found at asparagine 63, asparagine 122, asparagine 138, asparagine 213, asparagine 264, and asparagine 331. Ig-like C2-type domains follow at residues 143 to 232 and 242 to 350; these read CYNS…TELT and PKIL…IQLS. Cysteines 164 and 216 form a disulfide. An intrachain disulfide couples cysteine 267 to cysteine 334. Residues 358–378 traverse the membrane as a helical segment; that stretch reads VELAGGLGAILLMLIFLVSLY. Topologically, residues 379 to 700 are cytoplasmic; sequence KCYRIELMLF…RETSISSVIW (322 aa). In terms of domain architecture, TIR spans 403 to 559; the sequence is KDYDAYVSYT…RFWKQLQYEM (157 aa). The active site involves glutamate 491. A required for synaptic vesicle accumulation during synaptogenesis region spans residues 564–700; that stretch reads PEPKLSHEQV…RETSISSVIW (137 aa).

The protein belongs to the interleukin-1 receptor family.

It is found in the cell membrane. The protein resides in the cytoplasm. The enzyme catalyses NAD(+) + H2O = ADP-D-ribose + nicotinamide + H(+). May regulate secretion and presynaptic differentiation through inhibition of the activity of N-type voltage-gated calcium channel. During presynaptic differentiation may regulate both synaptic vesicle accumulation in axon terminals and subsequent axon terminal remodeling. The chain is Interleukin-1 receptor accessory protein-like 1-B (il1rapl1b) from Danio rerio (Zebrafish).